A 424-amino-acid polypeptide reads, in one-letter code: O-methyltransferase aunD (424 aa).

Asp-275 is an S-adenosyl-L-methionine binding site. His-326 serves as the catalytic Proton acceptor.

Belongs to the class I-like SAM-binding methyltransferase superfamily. Cation-independent O-methyltransferase family.

The protein operates within secondary metabolite biosynthesis. In terms of biological role, O-methyltransferase; part of the gene cluster that mediates the biosynthesis of aurasperone B, a dimeric gamma-naphthopyrone. The first step in the biosynthesis of aurasperone B is the production of gamma-naphthopyrone precursor YWA1 by the non-reducing polyketide synthase albA, via condensation of one acetyl-CoA starter unit with 6 malonyl-CoA units. YWA1 is then methylated by aunE at position C-6 to yield foncesin which is further methylated at position C-8 by aunD to produce fonsecin B. A key enzyme in the biosynthetic pathway is the cytochrome P450 monooxygenase aunB which catalyzes the oxidative dimerization of fonsecin B to aurasperone B. AunB also catalyzes the oxidative dimerization of rubrofusarin B into aurasperone A. The protein is O-methyltransferase aunD of Aspergillus niger (strain ATCC MYA-4892 / CBS 513.88 / FGSC A1513).